The chain runs to 319 residues: Ribose-phosphate pyrophosphokinase (319 aa).

Residues 40–42 and 99–100 contribute to the ATP site; these read DGE and RQ. Residues H134 and D174 each coordinate Mg(2+). The active site involves K198. Residues R200, D224, and 228–232 each bind D-ribose 5-phosphate; that span reads DTAGT.

The protein belongs to the ribose-phosphate pyrophosphokinase family. Class I subfamily. In terms of assembly, homohexamer. Mg(2+) serves as cofactor.

The protein resides in the cytoplasm. The enzyme catalyses D-ribose 5-phosphate + ATP = 5-phospho-alpha-D-ribose 1-diphosphate + AMP + H(+). It participates in metabolic intermediate biosynthesis; 5-phospho-alpha-D-ribose 1-diphosphate biosynthesis; 5-phospho-alpha-D-ribose 1-diphosphate from D-ribose 5-phosphate (route I): step 1/1. Functionally, involved in the biosynthesis of the central metabolite phospho-alpha-D-ribosyl-1-pyrophosphate (PRPP) via the transfer of pyrophosphoryl group from ATP to 1-hydroxyl of ribose-5-phosphate (Rib-5-P). In Coxiella burnetii (strain RSA 493 / Nine Mile phase I), this protein is Ribose-phosphate pyrophosphokinase.